A 322-amino-acid polypeptide reads, in one-letter code: tRNA U34 carboxymethyltransferase (322 aa).

Residues Lys-90, Trp-104, Lys-109, Gly-129, 151–153 (DPT), 180–181 (IE), Met-195, Tyr-199, and Arg-314 contribute to the carboxy-S-adenosyl-L-methionine site.

Belongs to the class I-like SAM-binding methyltransferase superfamily. CmoB family. Homotetramer.

It carries out the reaction carboxy-S-adenosyl-L-methionine + 5-hydroxyuridine(34) in tRNA = 5-carboxymethoxyuridine(34) in tRNA + S-adenosyl-L-homocysteine + H(+). Catalyzes carboxymethyl transfer from carboxy-S-adenosyl-L-methionine (Cx-SAM) to 5-hydroxyuridine (ho5U) to form 5-carboxymethoxyuridine (cmo5U) at position 34 in tRNAs. The polypeptide is tRNA U34 carboxymethyltransferase (Citrobacter koseri (strain ATCC BAA-895 / CDC 4225-83 / SGSC4696)).